Consider the following 386-residue polypeptide: Succinate--CoA ligase [ADP-forming] subunit beta (386 aa).

The region spanning 9 to 244 (KDLLTSYAIP…PSQENVRDVL (236 aa)) is the ATP-grasp domain. ATP-binding positions include Lys46, 53–55 (GRG), Val102, and Glu107. Mg(2+) contacts are provided by Asn199 and Asp213. Substrate is bound by residues Asn264 and 321–323 (GIM).

It belongs to the succinate/malate CoA ligase beta subunit family. In terms of assembly, heterotetramer of two alpha and two beta subunits. Mg(2+) is required as a cofactor.

The catalysed reaction is succinate + ATP + CoA = succinyl-CoA + ADP + phosphate. It carries out the reaction GTP + succinate + CoA = succinyl-CoA + GDP + phosphate. It participates in carbohydrate metabolism; tricarboxylic acid cycle; succinate from succinyl-CoA (ligase route): step 1/1. Succinyl-CoA synthetase functions in the citric acid cycle (TCA), coupling the hydrolysis of succinyl-CoA to the synthesis of either ATP or GTP and thus represents the only step of substrate-level phosphorylation in the TCA. The beta subunit provides nucleotide specificity of the enzyme and binds the substrate succinate, while the binding sites for coenzyme A and phosphate are found in the alpha subunit. The protein is Succinate--CoA ligase [ADP-forming] subunit beta of Chlamydia abortus (strain DSM 27085 / S26/3) (Chlamydophila abortus).